The sequence spans 393 residues: S-adenosylmethionine synthase (393 aa).

Residue histidine 17 participates in ATP binding. Aspartate 19 is a binding site for Mg(2+). Glutamate 45 contributes to the K(+) binding site. Residues glutamate 58 and glutamine 104 each contribute to the L-methionine site. Residues glutamine 104 to glutamate 114 form a flexible loop region. ATP is bound by residues aspartate 171 to lysine 173, aspartate 245, arginine 251 to lysine 252, alanine 268, and lysine 272. Residue aspartate 245 coordinates L-methionine. Lysine 276 provides a ligand contact to L-methionine.

This sequence belongs to the AdoMet synthase family. In terms of assembly, homotetramer; dimer of dimers. Mg(2+) is required as a cofactor. K(+) serves as cofactor.

It localises to the cytoplasm. The catalysed reaction is L-methionine + ATP + H2O = S-adenosyl-L-methionine + phosphate + diphosphate. It participates in amino-acid biosynthesis; S-adenosyl-L-methionine biosynthesis; S-adenosyl-L-methionine from L-methionine: step 1/1. Its function is as follows. Catalyzes the formation of S-adenosylmethionine (AdoMet) from methionine and ATP. The overall synthetic reaction is composed of two sequential steps, AdoMet formation and the subsequent tripolyphosphate hydrolysis which occurs prior to release of AdoMet from the enzyme. In Hyphomonas neptunium (strain ATCC 15444), this protein is S-adenosylmethionine synthase.